We begin with the raw amino-acid sequence, 685 residues long: MWLLLRRAYPLRILLPLRGEWVGRRGLPRSLAPGPPRRRYRKEALPALEMPVSPVTTTEIRQYLRAHGIPFQDGHSCLRAPSPFVVSSDIKNEKKDAPTSFCLFIDKTTGHFLCMTSLAEGSWEDLQASVEGRGDGAKEGVLLREGPEAEVREEVLRIWNRAIPLWELPDPEEAQLARVMFGLTKVTDDTLRRFSVRYLRSARSLVFPWFTPGSSGLRGLKLLGAEGQENGVQYVETTIPRPGVYHNLFGLPLISRRDTEVVVTSRELDSLALSQSTGLPTLSLPRGTVCLPPALLPYLEQFRRIVFWLGDDLRSWEAAKLFARKLNPKRCSLVRPGNQQPRPLEALNQGLSLPRILRTALPAWHKSIVSFRQLREEVLGELSNVEQAAGVRWSRFPDLNRLLKGHRKGELTVFTGPTGSGKTTFISEYALDLCTQGVNTLWGSFEISNVRLARVMLTQFAVTRLEEQLDKYEEWADRFEDLPLYFMTFHGQQSIRSVIDTMQHAVYVYDVCHVVIDNLQFMMGHEQLSSDRIAAQDYIVGAFRKFATDNSCHVTLVIHPRKEDDDKELQTASIFGSAKASQEADNVLILQDRKLVTGPGKRYLQVSKNRFDGDVGVFPLEFNKNSLTFSIPPKSKARLKKIKDDNGLVAKKSSSGKKGAAHQNPEICLGQDPSPAQPDTSKSSG.

The N-terminal 31 residues, 1 to 31, are a transit peptide targeting the mitochondrion; sequence MWLLLRRAYPLRILLPLRGEWVGRRGLPRSL. Residues 1–122 are contributes to single strand DNA binding activity; sequence MWLLLRRAYP…LCMTSLAEGS (122 aa). The N-terminal region (NTR) stretch occupies residues 54 to 214; that stretch reads PVTTTEIRQY…LVFPWFTPGS (161 aa). The interval 122-373 is required for hexamers formation and DNA helicase activity; sequence SWEDLQASVE…WHKSIVSFRQ (252 aa). Residues 215–335 form a primase-like domain region; sequence SGLRGLKLLG…LNPKRCSLVR (121 aa). The SF4 helicase domain maps to 385–636; that stretch reads VEQAAGVRWS…LTFSIPPKSK (252 aa). The interval 406–591 is maybe required for stable oligomeric structure; it reads HRKGELTVFT…QEADNVLILQ (186 aa). Residue 416-423 participates in ATP binding; it reads GPTGSGKT. Residues 454-482 are a coiled coil; it reads RVMLTQFAVTRLEEQLDKYEEWADRFEDL. The segment at 641-685 is might negatively regulate ATPase activity; it reads KIKDDNGLVAKKSSSGKKGAAHQNPEICLGQDPSPAQPDTSKSSG. The segment at 642 to 685 is disordered; that stretch reads IKDDNGLVAKKSSSGKKGAAHQNPEICLGQDPSPAQPDTSKSSG.

Homohexamer (via C-terminus), which assembles in a ring-like structure. Homoheptamer, which assembles in a ring-like structure. Homooctamer, which assembles in a ring-like structure. Oligomers may sequentially eject two monomers (octamer&gt;heptamer&gt;hexamer) upon DNA binding. Oligomerization is Mg(2+), nucleotide and DNA-independent, however, Mg(2+) and nucleotide stabilize the homohexameric form. Interacts with POLG in vitro. Interacts with LONP1. As to expression, ubiquitous with the highest levels in the liver, heart and kidneys. The skeletal muscle, brain and testis showed lower but detectable expression. Expression is coregulated with MRPL43.

It is found in the mitochondrion matrix. The protein resides in the mitochondrion nucleoid. Its subcellular location is the mitochondrion inner membrane. The enzyme catalyses ATP + H2O = ADP + phosphate + H(+). It catalyses the reaction Couples ATP hydrolysis with the unwinding of duplex DNA at the replication fork by translocating in the 5'-3' direction. This creates two antiparallel DNA single strands (ssDNA). The leading ssDNA polymer is the template for DNA polymerase III holoenzyme which synthesizes a continuous strand.. Mitochondrial helicase involved in mtDNA replication and repair. Might have a role in mtDNA repair. Has DNA strand separation activity needed to form a processive replication fork for leading strand synthesis which is catalyzed by the formation of a replisome complex with POLG and mtSDB. Preferentially unwinds DNA substrates with pre-existing 5'-and 3'- single-stranded tails but is also active on a 5'- flap substrate. Can dissociate the invading strand of immobile or mobile D-loop DNA structures irrespective of the single strand polarity of the third strand. In addition to its DNA strand separation activity, also has DNA strand annealing, DNA strand-exchange and DNA branch migration activities. The protein is Twinkle mtDNA helicase of Mus musculus (Mouse).